The sequence spans 262 residues: Glutamate racemase (262 aa).

Residues 9 to 10 and 41 to 42 contribute to the substrate site; these read DS and YG. The Proton donor/acceptor role is filled by Cys-73. 74 to 75 provides a ligand contact to substrate; that stretch reads NT. Cys-180 (proton donor/acceptor) is an active-site residue. 181–182 contacts substrate; that stretch reads TH.

Belongs to the aspartate/glutamate racemases family.

The enzyme catalyses L-glutamate = D-glutamate. It participates in cell wall biogenesis; peptidoglycan biosynthesis. Its function is as follows. Provides the (R)-glutamate required for cell wall biosynthesis. The protein is Glutamate racemase of Aliivibrio fischeri (strain ATCC 700601 / ES114) (Vibrio fischeri).